We begin with the raw amino-acid sequence, 181 residues long: Protein Syd (181 aa).

This sequence belongs to the Syd family.

The protein resides in the cell inner membrane. In terms of biological role, interacts with the SecY protein in vivo. May bind preferentially to an uncomplexed state of SecY, thus functioning either as a chelating agent for excess SecY in the cell or as a regulatory factor that negatively controls the translocase function. The sequence is that of Protein Syd from Escherichia coli (strain K12 / DH10B).